The primary structure comprises 360 residues: Photosystem II protein D1 1 (360 aa).

3 helical membrane passes run 29 to 46 (YVGW…TAAI), 118 to 133 (HFLI…QWEL), and 142 to 156 (WIPV…AATA). His-118 is a binding site for chlorophyll a. Pheophytin a is bound at residue Tyr-126. Residues Asp-170 and Glu-189 each coordinate [CaMn4O5] cluster. The helical transmembrane segment at 197-218 (FHMIGVAGVFGGALFSAMHGSL) threads the bilayer. Chlorophyll a is bound at residue His-198. A quinone-binding positions include His-215 and 264-265 (SF). His-215 contacts Fe cation. Residue His-272 coordinates Fe cation. A helical membrane pass occupies residues 274–288 (FLAAWPVIGIWFAAL). Positions 332, 333, 342, and 344 each coordinate [CaMn4O5] cluster. Residues 345-360 (SGEVQPIALAAPAIAS) constitute a propeptide that is removed on maturation.

Belongs to the reaction center PufL/M/PsbA/D family. In terms of assembly, PSII is composed of 1 copy each of membrane proteins PsbA, PsbB, PsbC, PsbD, PsbE, PsbF, PsbH, PsbI, PsbJ, PsbK, PsbL, PsbM, PsbT, PsbX, PsbY, PsbZ, Psb30/Ycf12, peripheral proteins PsbO, CyanoQ (PsbQ), PsbU, PsbV and a large number of cofactors. It forms dimeric complexes. It depends on The D1/D2 heterodimer binds P680, chlorophylls that are the primary electron donor of PSII, and subsequent electron acceptors. It shares a non-heme iron and each subunit binds pheophytin, quinone, additional chlorophylls, carotenoids and lipids. D1 provides most of the ligands for the Mn4-Ca-O5 cluster of the oxygen-evolving complex (OEC). There is also a Cl(-1) ion associated with D1 and D2, which is required for oxygen evolution. The PSII complex binds additional chlorophylls, carotenoids and specific lipids. as a cofactor. In terms of processing, tyr-161 forms a radical intermediate that is referred to as redox-active TyrZ, YZ or Y-Z. Post-translationally, C-terminally processed by CtpA; processing is essential to allow assembly of the oxygen-evolving complex and thus photosynthetic growth.

Its subcellular location is the cellular thylakoid membrane. It carries out the reaction 2 a plastoquinone + 4 hnu + 2 H2O = 2 a plastoquinol + O2. Functionally, photosystem II (PSII) is a light-driven water:plastoquinone oxidoreductase that uses light energy to abstract electrons from H(2)O, generating O(2) and a proton gradient subsequently used for ATP formation. It consists of a core antenna complex that captures photons, and an electron transfer chain that converts photonic excitation into a charge separation. The D1/D2 (PsbA/PsbD) reaction center heterodimer binds P680, the primary electron donor of PSII as well as several subsequent electron acceptors. This chain is Photosystem II protein D1 1, found in Trichormus variabilis (strain ATCC 29413 / PCC 7937) (Anabaena variabilis).